The sequence spans 283 residues: Non-selective voltage-gated ion channel VDAC1 (283 aa).

N-acetylalanine is present on Ala-2. Lys-12 lines the ATP pocket. Residue Lys-12 forms a Glycyl lysine isopeptide (Lys-Gly) (interchain with G-Cter in ubiquitin) linkage. Ser-13 carries the post-translational modification Phosphoserine. Residue Thr-19 is modified to Phosphothreonine. Lys-20 lines the ATP pocket. Lys-20 is subject to N6-acetyllysine; alternate. Lys-20 is subject to N6-succinyllysine; alternate. Lys-20 participates in a covalent cross-link: Glycyl lysine isopeptide (Lys-Gly) (interchain with G-Cter in ubiquitin); alternate. 2 beta stranded membrane-spanning segments follow: residues 26 to 35 and 39 to 47; these read LIKLDLKTKS and LEFTSSGSA. Residues Lys-53 and Lys-61 each participate in a glycyl lysine isopeptide (Lys-Gly) (interchain with G-Cter in ubiquitin) cross-link. The beta stranded transmembrane segment at 54-64 threads the bilayer; sequence VNGSLETKYRW. Phosphotyrosine is present on Tyr-67. A run of 3 beta stranded transmembrane segments spans residues 69–76, 80–89, and 95–104; these read LTFTEKWN, TLGTEITVED, and LKLTFDSSFS. Thr-107 bears the Phosphothreonine mark. An N6-acetyllysine; alternate modification is found at Lys-109. Lys-109 participates in a covalent cross-link: Glycyl lysine isopeptide (Lys-Gly) (interchain with G-Cter in ubiquitin); alternate. Lys-110 is covalently cross-linked (Glycyl lysine isopeptide (Lys-Gly) (interchain with G-Cter in ubiquitin)). A run of 4 beta stranded transmembrane segments spans residues 111 to 120, 123 to 130, 137 to 145, and 150 to 158; these read NAKIKTGYKR, INLGCDVD, SIRGALVLG, and LAGYQMNFE. The residue at position 137 (Ser-137) is a Phosphoserine. A Glycyl lysine isopeptide (Lys-Gly) (interchain with G-Cter in ubiquitin) cross-link involves residue Lys-161. The next 6 beta stranded transmembrane spans lie at 163–175, 178–185, 189–198, 202–211, 218–227, and 231–238; these read RVTQSNFAVGYKT, FQLHTNVN, EFGGSIYQKV, LETAVNLAWT, RFGIAAKYQV, and ACFSAKVN. A Phosphoserine; by NEK1 modification is found at Ser-193. Residue Ser-240 is modified to Phosphoserine. 242–244 serves as a coordination point for NAD(+); it reads LIG. A beta stranded transmembrane segment spans residues 242–251; sequence LIGLGYTQTL. Lys-252 carries the N6-acetyllysine modification. Residues 254-263 traverse the membrane as a beta stranded segment; the sequence is GIKLTLSALL. Position 260–264 (260–264) interacts with NAD(+); that stretch reads SALLD. At Lys-266 the chain carries N6-acetyllysine; alternate. Lys-266 is covalently cross-linked (Glycyl lysine isopeptide (Lys-Gly) (interchain with G-Cter in ubiquitin); alternate). Residues 273–282 form a beta stranded membrane-spanning segment; it reads HKLGLGLEFQ. Lys-274 is covalently cross-linked (Glycyl lysine isopeptide (Lys-Gly) (interchain with G-Cter in ubiquitin)).

This sequence belongs to the eukaryotic mitochondrial porin family. In terms of assembly, homodimer and homotrimer; in response to cyclic AMP or calcium; oligomerization is required for scramblase activity. Component of the mitochondrial permeability transition pore complex (mPTPC), at least composed of SPG7, VDAC1 and PPIF. Interacts with SPG7, NIPSNAP2 and SLC25A30. Interacts with hexokinases including HK1. The HK1-VDAC1 complex interacts with ATF2. Interacts with BCL2L1. Interacts with BAK1. Interacts with RTL10/BOP (via BH3 domain). Interacts with amyloid-beta and APP; induces VDAC1 dephosphorylation. Interacts with TMEM41B. Interacts with BCAP31. Interacts with HSPA9; this interaction couples ITPR1 to VDAC1. Phosphorylation at Ser-193 by NEK1 promotes the closed conformational state preventing excessive mitochondrial membrane permeability and subsequent apoptotic cell death after injury. Phosphorylation by the AKT-GSK3B axis stabilizes the protein probably by preventing ubiquitin-mediated proteasomal degradation. In terms of processing, ubiquitinated. Undergoes monoubiquitination and polyubiquitination by PRKN; monoubiquitination at Lys-274 inhibits apoptosis, whereas polyubiquitination leads to its degradation and promotes mitophagy. Deubiquitinated by USP30. As to expression, widely expressed. High levels in heart and kidney with lower levels in brain and ascitic tumor. Very low levels in liver.

The protein localises to the mitochondrion outer membrane. It localises to the cell membrane. Its subcellular location is the membrane raft. It catalyses the reaction Ca(2+)(in) = Ca(2+)(out). It carries out the reaction Na(+)(in) = Na(+)(out). The catalysed reaction is chloride(in) = chloride(out). The enzyme catalyses Mg(2+)(in) = Mg(2+)(out). It catalyses the reaction K(+)(in) = K(+)(out). It carries out the reaction ATP(in) = ATP(out). The catalysed reaction is L-glutamate(out) = L-glutamate(in). The enzyme catalyses dopamine(out) = dopamine(in). It catalyses the reaction acetylcholine(in) = acetylcholine(out). It carries out the reaction Fe(III)-[cytochrome c](out) = Fe(III)-[cytochrome c](in). The catalysed reaction is a 1,2-diacyl-sn-glycero-3-phosphocholine(in) = a 1,2-diacyl-sn-glycero-3-phosphocholine(out). The enzyme catalyses a 1,2-diacyl-sn-glycero-3-phospho-L-serine(in) = a 1,2-diacyl-sn-glycero-3-phospho-L-serine(out). Its activity is regulated as follows. Inhibited by nitric oxide. Voltage-gated ion channel activity is inhibited by lanthanum(3+) and ruthenium red. Mitochondrial calcium transport is inhibited by lanthanum(3+), ruthenium red and Ru360. Functionally, non-selective voltage-gated ion channel that mediates the transport of anions and cations through the mitochondrion outer membrane and plasma membrane. The channel at the outer mitochondrial membrane allows diffusion of small hydrophilic molecules; in the plasma membrane it is involved in cell volume regulation and apoptosis. It adopts an open conformation at low or zero membrane potential and a closed conformation at potentials above 30-40 mV. The open state has a weak anion selectivity whereas the closed state is cation-selective. Binds various signaling molecules, including the sphingolipid ceramide, the phospholipid phosphatidylcholine, and the sterols cholesterol and oxysterol. In depolarized mitochondria, acts downstream of PRKN and PINK1 to promote mitophagy or prevent apoptosis; polyubiquitination by PRKN promotes mitophagy, while monoubiquitination by PRKN decreases mitochondrial calcium influx which ultimately inhibits apoptosis. May participate in the formation of the permeability transition pore complex (PTPC) responsible for the release of mitochondrial products that triggers apoptosis. May mediate ATP export from cells. Part of a complex composed of HSPA9, ITPR1 and VDAC1 that regulates mitochondrial calcium-dependent apoptosis by facilitating calcium transport from the ER lumen to the mitochondria intermembrane space thus providing calcium for the downstream calcium channel MCU that directly releases it into mitochondria matrix. Catalyzes the scrambling of phospholipids across the outer mitochondrial membrane; the mechanism is unrelated to channel activity and is capable of translocating both anionic and zwitterionic phospholipids. The sequence is that of Non-selective voltage-gated ion channel VDAC1 from Rattus norvegicus (Rat).